Consider the following 227-residue polypeptide: Thiocyanate methyltransferase 1 (227 aa).

The S-adenosyl-L-methionine site is built by Trp36, Trp40, Trp47, and Gly74. Ser86 carries the post-translational modification Phosphoserine. Residues Asp95, 123 to 124 (DV), and Tyr139 contribute to the S-adenosyl-L-methionine site.

Belongs to the class I-like SAM-binding methyltransferase superfamily. TPMT family. In terms of tissue distribution, expressed in shoots, leaves, stems, inflorescences, flowers and green siliques.

The enzyme catalyses thiocyanate + S-adenosyl-L-methionine = methyl thiocyanate + S-adenosyl-L-homocysteine. In terms of biological role, S-adenosyl-L-methionine-dependent methyltransferase. Involved in glucosinolate metabolism and defense against phytopathogens. Highly reactive to thiocyanate (NCS(-)) derived from myrosinase-mediated hydrolysis of glucosinolates upon tissue damage. This chain is Thiocyanate methyltransferase 1, found in Arabidopsis thaliana (Mouse-ear cress).